The following is a 483-amino-acid chain: MRFKQDFFEQLVGYYSQVFPQGISNPHWLAWSEDAAGLIGLTQPTDELLQGMSGNAQIDGASYYAQVYSGHQFGGYSPQLGDGRSIILGEALGPQGTWDVALKGAGPTPYSRHGDGRAVMRSAVREFLISEALHHLHIPTTRALAVIGSDVPVWRETQETAAITVRLAKSHIRFGHFEFFCHSERGAPTKLKQLLDFTISQHYPDLSCDAAGYKAWFARVVTDTAKMIANWQAIGFAHGVMNTDNMSILGDTFDFGPFAFLDTFKEDFICNHSDPEGRYAFGQQPGIGLWNLQRLAQALSSIIASDDLIAALNMYQGELVKHYLILMRGKLGLTTSVTEAELDDQDLALIGGFTSLMERNQLDYTNTWRRFGQLDPSSSHSSLRDDFVDRDGFDAWYQLYQARLGNVEEVEQWQAARNRANPKYILRNYLAQEAIIGVEEGNLAPLQQLQQVLQNPFDEQLEFDDLAKRPPDWGQGLIMSCSS.

The ATP site is built by Gly81, Gly83, Arg84, Lys103, Asp115, Gly116, Arg166, and Arg173. Asp244 acts as the Proton acceptor in catalysis. Residues Asn245 and Asp254 each coordinate Mg(2+). Position 254 (Asp254) interacts with ATP.

This sequence belongs to the SELO family. Mg(2+) serves as cofactor. Requires Mn(2+) as cofactor.

It catalyses the reaction L-seryl-[protein] + ATP = 3-O-(5'-adenylyl)-L-seryl-[protein] + diphosphate. It carries out the reaction L-threonyl-[protein] + ATP = 3-O-(5'-adenylyl)-L-threonyl-[protein] + diphosphate. The enzyme catalyses L-tyrosyl-[protein] + ATP = O-(5'-adenylyl)-L-tyrosyl-[protein] + diphosphate. The catalysed reaction is L-histidyl-[protein] + UTP = N(tele)-(5'-uridylyl)-L-histidyl-[protein] + diphosphate. It catalyses the reaction L-seryl-[protein] + UTP = O-(5'-uridylyl)-L-seryl-[protein] + diphosphate. It carries out the reaction L-tyrosyl-[protein] + UTP = O-(5'-uridylyl)-L-tyrosyl-[protein] + diphosphate. Functionally, nucleotidyltransferase involved in the post-translational modification of proteins. It can catalyze the addition of adenosine monophosphate (AMP) or uridine monophosphate (UMP) to a protein, resulting in modifications known as AMPylation and UMPylation. The polypeptide is Protein nucleotidyltransferase YdiU (Shewanella halifaxensis (strain HAW-EB4)).